We begin with the raw amino-acid sequence, 217 residues long: Monomethylamine corrinoid protein 2 (217 aa).

The 91-residue stretch at 1 to 91 folds into the B12-binding N-terminal domain; that stretch reads MTNTEIFDKL…ELEKNKKEGD (91 aa). Positions 93-217 constitute a B12-binding domain; it reads AGLAITFVAE…AAKVALEVMK (125 aa). H106 is a methylcob(III)alamin binding site.

This sequence belongs to the methylamine corrinoid protein family. Can form a complex with MtmB.

It participates in one-carbon metabolism; methanogenesis from methylamine. Acts as a methyl group carrier between MtmB and MtbA. The chain is Monomethylamine corrinoid protein 2 (mtmC2) from Methanosarcina barkeri.